Here is a 327-residue protein sequence, read N- to C-terminus: tRNA dimethylallyltransferase (327 aa).

14–21 (GPTASGKT) serves as a coordination point for ATP. 16-21 (TASGKT) provides a ligand contact to substrate. Interaction with substrate tRNA regions lie at residues 39-42 (DSAL) and 163-167 (QRIQR).

The protein belongs to the IPP transferase family. Monomer. It depends on Mg(2+) as a cofactor.

It carries out the reaction adenosine(37) in tRNA + dimethylallyl diphosphate = N(6)-dimethylallyladenosine(37) in tRNA + diphosphate. In terms of biological role, catalyzes the transfer of a dimethylallyl group onto the adenine at position 37 in tRNAs that read codons beginning with uridine, leading to the formation of N6-(dimethylallyl)adenosine (i(6)A). The protein is tRNA dimethylallyltransferase of Xanthomonas oryzae pv. oryzae (strain MAFF 311018).